The primary structure comprises 723 residues: Polyribonucleotide nucleotidyltransferase (723 aa).

D488 and D494 together coordinate Mg(2+). Residues 555-614 (PKIITLNIKPEKIKDVIGPGGKQINAIIEETGVKIDIEQDGTVYIASQDQAMNRKAIAII) enclose the KH domain. Positions 624–692 (GEVYTGKVRR…HQGRVNLSRK (69 aa)) constitute an S1 motif domain. The segment at 692–723 (KALLEKKEQPEGDKKPQAEKKFYPKTKKPESK) is disordered. Over residues 693–723 (ALLEKKEQPEGDKKPQAEKKFYPKTKKPESK) the composition is skewed to basic and acidic residues.

The protein belongs to the polyribonucleotide nucleotidyltransferase family. It depends on Mg(2+) as a cofactor.

The protein resides in the cytoplasm. It carries out the reaction RNA(n+1) + phosphate = RNA(n) + a ribonucleoside 5'-diphosphate. In terms of biological role, involved in mRNA degradation. Catalyzes the phosphorolysis of single-stranded polyribonucleotides processively in the 3'- to 5'-direction. This is Polyribonucleotide nucleotidyltransferase from Listeria welshimeri serovar 6b (strain ATCC 35897 / DSM 20650 / CCUG 15529 / CIP 8149 / NCTC 11857 / SLCC 5334 / V8).